Here is an 88-residue protein sequence, read N- to C-terminus: uncharacterized protein (88 aa).

The next 2 helical transmembrane spans lie at 5–25 (AIPF…LLFV) and 36–56 (CYYL…VMIF).

The protein resides in the membrane. This is an uncharacterized protein from Saccharomyces cerevisiae (strain ATCC 204508 / S288c) (Baker's yeast).